Here is a 193-residue protein sequence, read N- to C-terminus: MLANLDRYKIVLASNSPRRKELMTGLGVDYVVKTLPDVDESYPDTLQGEEIPLFIAREKAAAYQSMIGPEELLITADTIVWHEGKALGKPVGRQDAIEMLRSLSGKSHQVITGVCVTTREWQKCFAAVTDVRFAILDEDEIAYYVDHYQPMDKAGSYGVQEWIGFVGVESISGSYFNVMGLPIQKLYRELKQL.

Catalysis depends on aspartate 77, which acts as the Proton acceptor.

Belongs to the Maf family. YhdE subfamily. A divalent metal cation is required as a cofactor.

The protein localises to the cytoplasm. It catalyses the reaction dTTP + H2O = dTMP + diphosphate + H(+). The enzyme catalyses UTP + H2O = UMP + diphosphate + H(+). Functionally, nucleoside triphosphate pyrophosphatase that hydrolyzes dTTP and UTP. May have a dual role in cell division arrest and in preventing the incorporation of modified nucleotides into cellular nucleic acids. The polypeptide is dTTP/UTP pyrophosphatase (Bacteroides fragilis (strain YCH46)).